A 1169-amino-acid chain; its full sequence is DNA-directed RNA polymerase subunit beta (1169 aa).

This sequence belongs to the RNA polymerase beta chain family. The RNAP catalytic core consists of 2 alpha, 1 beta, 1 beta' and 1 omega subunit. When a sigma factor is associated with the core the holoenzyme is formed, which can initiate transcription. Interacts with RbpA, which partially restores Rif-inhibited transcription.

It carries out the reaction RNA(n) + a ribonucleoside 5'-triphosphate = RNA(n+1) + diphosphate. Its function is as follows. DNA-dependent RNA polymerase catalyzes the transcription of DNA into RNA using the four ribonucleoside triphosphates as substrates. This subunit often mutates to generate rifampicin (Rif) resistance. Interaction with RbpA partially restores Rif-inhibited transcription; once the subunit is Rif-resistant however RbpA no longer stimulates transcription. In Mycolicibacterium smegmatis (strain ATCC 700084 / mc(2)155) (Mycobacterium smegmatis), this protein is DNA-directed RNA polymerase subunit beta.